A 452-amino-acid chain; its full sequence is Asparagine--tRNA ligase (452 aa).

The protein belongs to the class-II aminoacyl-tRNA synthetase family. As to quaternary structure, homodimer.

The protein resides in the cytoplasm. It catalyses the reaction tRNA(Asn) + L-asparagine + ATP = L-asparaginyl-tRNA(Asn) + AMP + diphosphate + H(+). The protein is Asparagine--tRNA ligase of Mycoplasma mycoides subsp. mycoides SC (strain CCUG 32753 / NCTC 10114 / PG1).